The chain runs to 185 residues: UPF0397 protein LGAS_1499 (185 aa).

5 helical membrane-spanning segments follow: residues 6-26 (GLSVKSVVAIGIGAAIYVILA), 46-66 (FLALLATIYGPVVGFSVGFIG), 78-98 (TWWSWVLATAVLGLIIGLYGM), 118-138 (VQIIANVISWLLIAPVGDILI), and 147-167 (FLQGATATITNSLSILILGTI).

The protein belongs to the UPF0397 family.

The protein localises to the cell membrane. The chain is UPF0397 protein LGAS_1499 from Lactobacillus gasseri (strain ATCC 33323 / DSM 20243 / BCRC 14619 / CIP 102991 / JCM 1131 / KCTC 3163 / NCIMB 11718 / NCTC 13722 / AM63).